The chain runs to 87 residues: Tan_10cys (87 aa).

The N-terminal stretch at 1 to 21 is a signal peptide; that stretch reads MNLKVLFLLAMVLVTLCLGED. Residues 22–27 constitute a propeptide that is removed on maturation; it reads RVTDRR.

It belongs to the teretoxin C (TC) superfamily. In terms of processing, contains 5 disulfide bonds. In terms of tissue distribution, expressed by the venom duct.

Its subcellular location is the secreted. The polypeptide is Tan_10cys (Terebra anilis (Auger snail)).